Consider the following 280-residue polypeptide: Formyltetrahydrofolate deformylase (280 aa).

One can recognise an ACT domain in the interval Val-8–Arg-86. The active site involves Asp-225.

This sequence belongs to the PurU family. As to quaternary structure, homohexamer.

It carries out the reaction (6R)-10-formyltetrahydrofolate + H2O = (6S)-5,6,7,8-tetrahydrofolate + formate + H(+). It participates in purine metabolism; IMP biosynthesis via de novo pathway; formate from 10-formyl-5,6,7,8-tetrahydrofolate: step 1/1. Its activity is regulated as follows. Activated by methionine, inhibited by glycine. Catalyzes the hydrolysis of 10-formyltetrahydrofolate (formyl-FH4) to formate and tetrahydrofolate (FH4). Provides the major source of formate for the PurT-dependent synthesis of 5'-phosphoribosyl-N-formylglycinamide (FGAR) during aerobic growth. Has a role in regulating the one-carbon pool. This chain is Formyltetrahydrofolate deformylase, found in Escherichia coli (strain K12).